The primary structure comprises 392 residues: MADPLALARALVACPSVTPRDAGALDVLESALIALGFRCVRLPFGAEGGERVDNLYARRGGAGPCFGFAGHTDVVPAGDGWSRPPFGAEVVDGALVGRGAADMKGGIACFVAAVARLISGPDSTGSISRHDPTGSIALLITGDEEGPALHGTRKVLEWMEGAGERMDLCLVGEPTNPEGLGDMIKIGRRGSLTATVTLLGRAGHVAYPHLADNPLHRLSTLTGLLLAETLDDGTAHFQPSSLQLTSIDVGNPAANVIPAKATLRFNIRFNDRHSGESLSAWIRARCLAACDGDESGFSLVLEHSGDAFLTPPGPLSDLIATACQAVTGRRPELSTSGGTSDARFIRSHCPVAEFGLVGRTMHKPDERVAVADLEALSEIYRRVLVGFFEAPC.

His71 provides a ligand contact to Zn(2+). Asp73 is a catalytic residue. Residue Asp102 coordinates Zn(2+). Catalysis depends on Glu144, which acts as the Proton acceptor. Residues Glu145, Glu173, and His362 each coordinate Zn(2+).

The protein belongs to the peptidase M20A family. DapE subfamily. In terms of assembly, homodimer. It depends on Zn(2+) as a cofactor. Co(2+) serves as cofactor.

It carries out the reaction N-succinyl-(2S,6S)-2,6-diaminopimelate + H2O = (2S,6S)-2,6-diaminopimelate + succinate. Its pathway is amino-acid biosynthesis; L-lysine biosynthesis via DAP pathway; LL-2,6-diaminopimelate from (S)-tetrahydrodipicolinate (succinylase route): step 3/3. Its function is as follows. Catalyzes the hydrolysis of N-succinyl-L,L-diaminopimelic acid (SDAP), forming succinate and LL-2,6-diaminopimelate (DAP), an intermediate involved in the bacterial biosynthesis of lysine and meso-diaminopimelic acid, an essential component of bacterial cell walls. The chain is Succinyl-diaminopimelate desuccinylase from Rhodospirillum rubrum (strain ATCC 11170 / ATH 1.1.1 / DSM 467 / LMG 4362 / NCIMB 8255 / S1).